The chain runs to 56 residues: uncharacterized protein (56 aa).

The chain crosses the membrane as a helical span at residues 2–22 (ILYIIVAISILLNIILGIKVI).

It is found in the membrane. This is an uncharacterized protein from Methanocaldococcus jannaschii (strain ATCC 43067 / DSM 2661 / JAL-1 / JCM 10045 / NBRC 100440) (Methanococcus jannaschii).